A 713-amino-acid polypeptide reads, in one-letter code: KNR4/SMI1 homolog (713 aa).

4 disordered regions span residues 18–129, 255–274, 400–457, and 500–713; these read PDRY…VTRD, IFINPNAGSPNSSTPGSPVA, RHQM…SKPA, and EPLE…KGKK. Residues 22–34 show a composition bias toward low complexity; sequence ASQQRSSKASQSA. Positions 35–65 are enriched in polar residues; it reads GANSQNRPLYNNDDNQSEMYQASSSYTGGYT. 2 stretches are compositionally biased toward low complexity: residues 66 to 81 and 88 to 103; these read NSPSASSSNLAGGAAA and SSRNNSTTNFSASSTS. A compositionally biased stretch (polar residues) spans 260–270; that stretch reads NAGSPNSSTPG. Positions 400 to 412 are enriched in basic and acidic residues; sequence RHQMQRREHERRQ. Over residues 413 to 429 the composition is skewed to low complexity; sequence AAAAAQQQQQQQQHHAQ. 2 stretches are compositionally biased toward basic and acidic residues: residues 507–605 and 613–662; these read EIKG…EEQK and AKAE…KIDE. Acidic residues predominate over residues 663–686; the sequence is ENGNAEEADEEADDDDEDDEEEGD. Residues 701–713 show a composition bias toward basic residues; that stretch reads SKSKKKNKKKGKK.

Belongs to the KNR4/SMI1 family.

This chain is KNR4/SMI1 homolog, found in Yarrowia lipolytica (strain CLIB 122 / E 150) (Yeast).